The primary structure comprises 452 residues: tRNA modification GTPase MnmE (452 aa).

Residues R21, E78, and K118 each contribute to the (6S)-5-formyl-5,6,7,8-tetrahydrofolate site. The TrmE-type G domain maps to 214 to 375; it reads GMKVVIAGRP…LREHLKQAMG (162 aa). N224 serves as a coordination point for K(+). GTP-binding positions include 224-229, 243-249, and 268-271; these read NAGKSS, TDIAGTT, and DTAG. Position 228 (S228) interacts with Mg(2+). The K(+) site is built by T243, I245, and T248. T249 contacts Mg(2+). Residue K452 coordinates (6S)-5-formyl-5,6,7,8-tetrahydrofolate.

It belongs to the TRAFAC class TrmE-Era-EngA-EngB-Septin-like GTPase superfamily. TrmE GTPase family. In terms of assembly, homodimer. Heterotetramer of two MnmE and two MnmG subunits. Requires K(+) as cofactor.

Its subcellular location is the cytoplasm. Its function is as follows. Exhibits a very high intrinsic GTPase hydrolysis rate. Involved in the addition of a carboxymethylaminomethyl (cmnm) group at the wobble position (U34) of certain tRNAs, forming tRNA-cmnm(5)s(2)U34. The polypeptide is tRNA modification GTPase MnmE (Haemophilus influenzae (strain PittGG)).